The following is a 254-amino-acid chain: Ribosomal RNA small subunit methyltransferase G (254 aa).

S-adenosyl-L-methionine is bound by residues Gly84, Phe89, 136 to 137 (VE), and Arg155. A disordered region spans residues 231 to 254 (HLYPRAVGIPSKQPLGIQADDNRS).

The protein belongs to the methyltransferase superfamily. RNA methyltransferase RsmG family.

It localises to the cytoplasm. Its function is as follows. Specifically methylates the N7 position of a guanine in 16S rRNA. This chain is Ribosomal RNA small subunit methyltransferase G, found in Synechococcus sp. (strain WH7803).